The sequence spans 363 residues: 3-isopropylmalate dehydrogenase (363 aa).

78-91 (GPKWENLPPESQPE) is a binding site for NAD(+). Residues Arg99, Arg109, Arg138, and Asp227 each contribute to the substrate site. Positions 227, 251, and 255 each coordinate Mg(2+). 285 to 297 (GSAPDIAGKNIAN) is a binding site for NAD(+).

The protein belongs to the isocitrate and isopropylmalate dehydrogenases family. LeuB type 1 subfamily. As to quaternary structure, homodimer. It depends on Mg(2+) as a cofactor. Mn(2+) is required as a cofactor.

It is found in the cytoplasm. It catalyses the reaction (2R,3S)-3-isopropylmalate + NAD(+) = 4-methyl-2-oxopentanoate + CO2 + NADH. It participates in amino-acid biosynthesis; L-leucine biosynthesis; L-leucine from 3-methyl-2-oxobutanoate: step 3/4. Catalyzes the oxidation of 3-carboxy-2-hydroxy-4-methylpentanoate (3-isopropylmalate) to 3-carboxy-4-methyl-2-oxopentanoate. The product decarboxylates to 4-methyl-2 oxopentanoate. This is 3-isopropylmalate dehydrogenase from Salmonella typhi.